We begin with the raw amino-acid sequence, 509 residues long: Bifunctional purine biosynthesis protein PurH (509 aa).

One can recognise an MGS-like domain in the interval 1–144 (MKRALISVSD…KNYAAVTVVV (144 aa)).

This sequence belongs to the PurH family.

It catalyses the reaction (6R)-10-formyltetrahydrofolate + 5-amino-1-(5-phospho-beta-D-ribosyl)imidazole-4-carboxamide = 5-formamido-1-(5-phospho-D-ribosyl)imidazole-4-carboxamide + (6S)-5,6,7,8-tetrahydrofolate. The enzyme catalyses IMP + H2O = 5-formamido-1-(5-phospho-D-ribosyl)imidazole-4-carboxamide. It participates in purine metabolism; IMP biosynthesis via de novo pathway; 5-formamido-1-(5-phospho-D-ribosyl)imidazole-4-carboxamide from 5-amino-1-(5-phospho-D-ribosyl)imidazole-4-carboxamide (10-formyl THF route): step 1/1. Its pathway is purine metabolism; IMP biosynthesis via de novo pathway; IMP from 5-formamido-1-(5-phospho-D-ribosyl)imidazole-4-carboxamide: step 1/1. The chain is Bifunctional purine biosynthesis protein PurH from Listeria monocytogenes serotype 4b (strain CLIP80459).